The following is a 168-amino-acid chain: Large ribosomal subunit protein uL5 (168 aa).

The protein belongs to the universal ribosomal protein uL5 family. As to quaternary structure, part of the 50S ribosomal subunit; contacts the 5S rRNA and probably tRNA. Forms a bridge to the 30S subunit in the 70S ribosome.

Functionally, this is one of the proteins that bind and probably mediate the attachment of the 5S RNA into the large ribosomal subunit, where it forms part of the central protuberance. In the 70S ribosome it contacts protein S13 of the 30S subunit (bridge B1b), connecting the 2 subunits; this bridge is implicated in subunit movement. May contact the P site tRNA; the 5S rRNA and some of its associated proteins might help stabilize positioning of ribosome-bound tRNAs. This is Large ribosomal subunit protein uL5 from Methanospirillum hungatei JF-1 (strain ATCC 27890 / DSM 864 / NBRC 100397 / JF-1).